The following is a 467-amino-acid chain: Fumarate hydratase class II (467 aa).

Substrate contacts are provided by residues 98-100, Arg126, 129-132, 139-141, and Thr187; these read SGT, HPND, and SSN. The active-site Proton donor/acceptor is the His188. The active site involves Ser318. Substrate contacts are provided by residues Ser319 and 324 to 326; that span reads KVN.

Belongs to the class-II fumarase/aspartase family. Fumarase subfamily. As to quaternary structure, homotetramer.

It is found in the cytoplasm. It carries out the reaction (S)-malate = fumarate + H2O. The protein operates within carbohydrate metabolism; tricarboxylic acid cycle; (S)-malate from fumarate: step 1/1. Involved in the TCA cycle. Catalyzes the stereospecific interconversion of fumarate to L-malate. The chain is Fumarate hydratase class II from Salmonella typhimurium (strain LT2 / SGSC1412 / ATCC 700720).